The primary structure comprises 455 residues: Bifunctional protein GlmU (455 aa).

Positions 1 to 227 (MGLSVIILAA…CEEVQGVNDR (227 aa)) are pyrophosphorylase. UDP-N-acetyl-alpha-D-glucosamine is bound by residues 8–11 (LAAG), K22, Q73, 78–79 (GT), 100–102 (YGD), G137, E152, N167, and N225. D102 is a binding site for Mg(2+). N225 contacts Mg(2+). The tract at residues 228–248 (WELTKLERYYQRLMAKKLSLA) is linker. The N-acetyltransferase stretch occupies residues 249 to 455 (GVTIIDPERF…KGWHRPTKKE (207 aa)). UDP-N-acetyl-alpha-D-glucosamine-binding residues include R332 and K350. Residue H362 is the Proton acceptor of the active site. Residues Y365 and N376 each coordinate UDP-N-acetyl-alpha-D-glucosamine. Acetyl-CoA contacts are provided by residues A379, 385–386 (NY), S404, A422, and R439.

This sequence in the N-terminal section; belongs to the N-acetylglucosamine-1-phosphate uridyltransferase family. The protein in the C-terminal section; belongs to the transferase hexapeptide repeat family. As to quaternary structure, homotrimer. Mg(2+) is required as a cofactor.

The protein resides in the cytoplasm. The catalysed reaction is alpha-D-glucosamine 1-phosphate + acetyl-CoA = N-acetyl-alpha-D-glucosamine 1-phosphate + CoA + H(+). It catalyses the reaction N-acetyl-alpha-D-glucosamine 1-phosphate + UTP + H(+) = UDP-N-acetyl-alpha-D-glucosamine + diphosphate. It functions in the pathway nucleotide-sugar biosynthesis; UDP-N-acetyl-alpha-D-glucosamine biosynthesis; N-acetyl-alpha-D-glucosamine 1-phosphate from alpha-D-glucosamine 6-phosphate (route II): step 2/2. Its pathway is nucleotide-sugar biosynthesis; UDP-N-acetyl-alpha-D-glucosamine biosynthesis; UDP-N-acetyl-alpha-D-glucosamine from N-acetyl-alpha-D-glucosamine 1-phosphate: step 1/1. The protein operates within bacterial outer membrane biogenesis; LPS lipid A biosynthesis. Functionally, catalyzes the last two sequential reactions in the de novo biosynthetic pathway for UDP-N-acetylglucosamine (UDP-GlcNAc). The C-terminal domain catalyzes the transfer of acetyl group from acetyl coenzyme A to glucosamine-1-phosphate (GlcN-1-P) to produce N-acetylglucosamine-1-phosphate (GlcNAc-1-P), which is converted into UDP-GlcNAc by the transfer of uridine 5-monophosphate (from uridine 5-triphosphate), a reaction catalyzed by the N-terminal domain. The sequence is that of Bifunctional protein GlmU from Coxiella burnetii (strain RSA 493 / Nine Mile phase I).